The sequence spans 267 residues: Type II pantothenate kinase (267 aa).

6-13 (DAGGTLIK) provides a ligand contact to ATP. The active-site Proton acceptor is Glu-70. ATP-binding positions include Thr-99, 121–125 (GGMIQ), Tyr-137, and Ser-225.

Belongs to the type II pantothenate kinase family. In terms of assembly, homodimer.

It is found in the cytoplasm. The enzyme catalyses (R)-pantothenate + ATP = (R)-4'-phosphopantothenate + ADP + H(+). The protein operates within cofactor biosynthesis; coenzyme A biosynthesis; CoA from (R)-pantothenate: step 1/5. Functionally, catalyzes the phosphorylation of pantothenate (Pan), the first step in CoA biosynthesis. The protein is Type II pantothenate kinase of Staphylococcus aureus (strain Mu50 / ATCC 700699).